Reading from the N-terminus, the 483-residue chain is Aspartyl/glutamyl-tRNA(Asn/Gln) amidotransferase subunit B (483 aa).

Belongs to the GatB/GatE family. GatB subfamily. In terms of assembly, heterotrimer of A, B and C subunits.

The enzyme catalyses L-glutamyl-tRNA(Gln) + L-glutamine + ATP + H2O = L-glutaminyl-tRNA(Gln) + L-glutamate + ADP + phosphate + H(+). It catalyses the reaction L-aspartyl-tRNA(Asn) + L-glutamine + ATP + H2O = L-asparaginyl-tRNA(Asn) + L-glutamate + ADP + phosphate + 2 H(+). Its function is as follows. Allows the formation of correctly charged Asn-tRNA(Asn) or Gln-tRNA(Gln) through the transamidation of misacylated Asp-tRNA(Asn) or Glu-tRNA(Gln) in organisms which lack either or both of asparaginyl-tRNA or glutaminyl-tRNA synthetases. The reaction takes place in the presence of glutamine and ATP through an activated phospho-Asp-tRNA(Asn) or phospho-Glu-tRNA(Gln). This is Aspartyl/glutamyl-tRNA(Asn/Gln) amidotransferase subunit B from Brachyspira hyodysenteriae (strain ATCC 49526 / WA1).